The primary structure comprises 395 residues: Elongation factor Tu (395 aa).

The 195-residue stretch at 10–204 folds into the tr-type G domain; that stretch reads KPHVNIGTIG…EVDAYIPTPE (195 aa). The tract at residues 19 to 26 is G1; sequence GHVDHGKT. Residue 19 to 26 coordinates GTP; that stretch reads GHVDHGKT. Thr-26 serves as a coordination point for Mg(2+). The G2 stretch occupies residues 60 to 64; it reads GITIS. Residues 81–84 are G3; that stretch reads DCPG. GTP-binding positions include 81–85 and 136–139; these read DCPGH and NKCD. A G4 region spans residues 136–139; sequence NKCD. The interval 174–176 is G5; it reads SAL.

Belongs to the TRAFAC class translation factor GTPase superfamily. Classic translation factor GTPase family. EF-Tu/EF-1A subfamily. In terms of assembly, monomer.

It is found in the cytoplasm. It catalyses the reaction GTP + H2O = GDP + phosphate + H(+). Its function is as follows. GTP hydrolase that promotes the GTP-dependent binding of aminoacyl-tRNA to the A-site of ribosomes during protein biosynthesis. This Bacillus cereus (strain G9842) protein is Elongation factor Tu.